We begin with the raw amino-acid sequence, 460 residues long: V-type ATP synthase beta chain 2 (460 aa).

Belongs to the ATPase alpha/beta chains family.

Its function is as follows. Produces ATP from ADP in the presence of a proton gradient across the membrane. The V-type beta chain is a regulatory subunit. The chain is V-type ATP synthase beta chain 2 from Clostridium tetani (strain Massachusetts / E88).